A 248-amino-acid chain; its full sequence is 14-3-3 protein homolog 2 (248 aa).

Belongs to the 14-3-3 family.

The protein is 14-3-3 protein homolog 2 of Echinococcus granulosus (Hydatid tapeworm).